Reading from the N-terminus, the 469-residue chain is Transcriptional coactivator YAP1 (469 aa).

The segment covering 1–21 (MEPAQQPPPQPAPQGPAPPSV) has biased composition (pro residues). The segment at 1–47 (MEPAQQPPPQPAPQGPAPPSVSPAGTPAAPPAPPAGHQVVHVRGDSE) is disordered. A Phosphoserine modification is found at Ser-46. Residue Thr-48 is modified to Phosphothreonine. Residues 71–85 (MRLRKLPDSFFKPPE) adopt a coiled-coil conformation. Residue Lys-75 is modified to N6-lactoyllysine. The segment at 76–99 (LPDSFFKPPEPKSHSRQASTDAGT) is disordered. Residues Ser-90 and Ser-94 each carry the phosphoserine modification. Phosphothreonine is present on residues Thr-95 and Thr-104. Phosphoserine; by LATS1 and LATS2 is present on Ser-112. A phosphoserine mark is found at Ser-113 and Ser-116. Thr-136 bears the Phosphothreonine; by MAPK8 and MAPK9 mark. Phosphoserine; by LATS1 and LATS2 is present on Ser-146. WW domains follow at residues 153 to 186 (VPLP…DPRK) and 212 to 245 (GPLP…DPRL). The interval 258 to 290 (SAPVKQPPPLAPQSPQGGVLGGGSSNQQQQIQL) is disordered. 2 positions are modified to phosphoserine: Ser-271 and Ser-320. The tract at residues 273-469 (QGGVLGGGSS…LDKESFLTWL (197 aa)) is transactivation domain. Positions 280–325 (GSSNQQQQIQLQQLQMEKERLRLKQQELFRQELALRSQLPSLEQDG) form a coiled coil. Ser-333 is subject to Phosphoserine; by MAPK8 and MAPK9. A compositionally biased stretch (polar residues) spans 345–357 (TNSSDPFLNSGTY). The interval 345 to 405 (TNSSDPFLNS…SQSTLPSQQS (61 aa)) is disordered. Phosphoserine occurs at positions 347, 348, and 354. The residue at position 363 (Ser-363) is a Phosphoserine; by LATS1 and LATS2. Positions 365-375 (DSGLSMSSYSI) are enriched in polar residues. Ser-366 and Ser-369 each carry phosphoserine; by CK1. Tyr-373 is subject to Phosphotyrosine; by ABL1. At Thr-378 the chain carries Phosphothreonine; by MAPK8 and MAPK9. Residues 393 to 405 (DTISQSTLPSQQS) show a composition bias toward polar residues.

This sequence belongs to the YAP1 family. Part of a complex when phosphorylated that contains DSG3, PKP1, YAP1 and YWHAG; the complex is required for localization of DSG3 and YAP1 to the cell membrane in keratinocytes. Binds to the SH3 domain of the YES kinase. Binds to WBP1 and WBP2. Binds, in vitro, through the WW1 domain, to neural isoforms of ENAH that contain the PPSY motif. The phosphorylated form interacts with YWHAB. Interacts (via WW domains) with LATS1 (via PPxY motif 2). Interacts with LATS2. Interacts (via WW domain 1) with ERBB4 (via PPxY motif 2). Interacts with TEAD1, TEAD2, TEAD3 and TEAD4. Interacts with TP73. Interacts with RUNX1. Interacts with HCK. Interacts (via WW domains) with PTPN14 (via PPxY motif 2); this interaction leads to the cytoplasmic sequestration of YAP1 and inhibits its transcriptional coactivator activity. Interacts (when phosphorylated at Ser-112) with SMAD2, SMAD3 and WWTR1. Interacts with PRRG2 (via cytoplasmic domain). Interacts (via WW domains) with PRRG4 (via cytoplasmic domain). Interacts (phosphorylated) with CLDN18; the interaction sequesters YAP1 away from the nucleus and thereby restricts transcription of YAP1 target genes. Interacts with SMAD1. Interacts with AMOT; the interaction facilitates translocation of YAP1 to the cytoplasm and tight junctions. Interacts with AMOTL2, the interaction is required for ubiquitination of AMOTL2 and localization of YAP1 to tight junctions. In terms of processing, phosphorylated by LATS1 and LATS2; leading to cytoplasmic translocation and inactivation. Phosphorylated by ABL1; leading to YAP1 stabilization, enhanced interaction with TP73 and recruitment onto proapoptotic genes; in response to DNA damage. Phosphorylation at Ser-366 and Ser-369 by CK1 is triggered by previous phosphorylation at Ser-363 by LATS proteins and leads to YAP1 ubiquitination by SCF(beta-TRCP) E3 ubiquitin ligase and subsequent degradation. Phosphorylated at Thr-104, Thr-136, Ser-333 and Thr-378 by MAPK8/JNK1 and MAPK9/JNK2, which is required for the regulation of apoptosis by YAP1. Lactylation by AARS1 promotes nuclear localization and stabilization of YAP1, leading to increased Hippo signaling pathway. Delactylated by SIRT1. Post-translationally, ubiquitinated by SCF(beta-TRCP) E3 ubiquitin ligase. As to expression, highly specific to cortical neurons.

Its subcellular location is the cytoplasm. It is found in the nucleus. The protein resides in the cell junction. It localises to the tight junction. The protein localises to the cell membrane. Functionally, transcriptional regulator with dual roles as a coactivator and corepressor. Critical downstream regulatory target in the Hippo signaling pathway, crucial for organ size control and tumor suppression by restricting proliferation and promoting apoptosis. The Hippo signaling pathway core involves a kinase cascade featuring STK3/MST2 and STK4/MST1, along with its regulatory partner SAV1, which phosphorylates and activates LATS1/2 in complex with their regulatory protein, MOB1. This activation leads to the phosphorylation and inactivation of the YAP1 oncoprotein and WWTR1/TAZ. Phosphorylation of YAP1 by LATS1/2 prevents its nuclear translocation, thereby regulating the expression of its target genes. The transcriptional regulation of gene expression requires TEAD transcription factors and modulates cell growth, anchorage-independent growth, and induction of epithelial-mesenchymal transition (EMT). Plays a key role in tissue tension and 3D tissue shape by regulating the cortical actomyosin network, acting via ARHGAP18, a Rho GTPase activating protein that suppresses F-actin polymerization. It also suppresses ciliogenesis by acting as a transcriptional corepressor of TEAD4 target genes AURKA and PLK1. In conjunction with WWTR1, regulates TGFB1-dependent SMAD2 and SMAD3 nuclear accumulation. Synergizes with WBP2 to enhance PGR activity. In terms of biological role, attenuates p73-mediated cell death signaling in transcriptional repression-induced atypical death (TRIAD) of neurons. The sequence is that of Transcriptional coactivator YAP1 (Yap1) from Rattus norvegicus (Rat).